A 417-amino-acid polypeptide reads, in one-letter code: Carbon catabolite repressor protein 4 homolog 4 (417 aa).

Phe-2 bears the N-acetylserine mark. Residue Glu-143 coordinates Mg(2+).

The protein belongs to the CCR4/nocturin family. As to quaternary structure, component of the CCR4-NOT complex, at least composed of CRR4 and CAF1 proteins. Forms homooligomers. Mg(2+) serves as cofactor.

Its subcellular location is the nucleus. The protein localises to the cytoplasm. It catalyses the reaction Exonucleolytic cleavage of poly(A) to 5'-AMP.. Acts as a catalytic component of the CCR4-NOT core complex, which in the nucleus seems to be a general transcription factor, and in the cytoplasm the major mRNA deadenylase involved in mRNA turnover. Transcriptional regulator of circadian rhythms with poly(A)-degrading activity that affects the expression and rhythmicity of the clock core oscillator genes TOC1 and CCA1. Deadenylation may be a mechanism involved in the regulation of the circadian clock. May play a negative role in response against oxidative stress. Possesses magnesium-dependent poly(A)-specific exoribonuclease activity in vitro and is almost inactive with poly(U), poly(C) and poly(G) as substrates. In Arabidopsis thaliana (Mouse-ear cress), this protein is Carbon catabolite repressor protein 4 homolog 4.